The primary structure comprises 308 residues: Probable D,D-dipeptide transport ATP-binding protein DdpF (308 aa).

An ABC transporter domain is found at 8 to 243; it reads LRDVHINFPA…PAHPYTRLLL (236 aa). Residue 49 to 56 participates in ATP binding; the sequence is GESGCGKS.

The protein belongs to the ABC transporter superfamily. In terms of assembly, the complex is composed of two ATP-binding proteins (DdpD and DdpF), two transmembrane proteins (DdpB and DdpC) and a solute-binding protein (DdpA).

The protein localises to the cell inner membrane. Functionally, part of the ABC transporter complex DdpABCDF, which is probably involved in D,D-dipeptide transport. Probably responsible for energy coupling to the transport system. This Escherichia coli (strain K12) protein is Probable D,D-dipeptide transport ATP-binding protein DdpF.